Consider the following 651-residue polypeptide: Cytoplasmic tyrosine-protein kinase BMX (651 aa).

Residues 4–111 (KSILEELLLK…WLKALQKEIR (108 aa)) enclose the PH domain. Residues 113 to 149 (NPHLLIKYHSGFFVDGKFLCCQQSCKAAPGCTLWEAY) form a Btk-type zinc finger. His121, Cys132, Cys133, and Cys143 together coordinate Zn(2+). The region spanning 272–368 (WFAGNISRSQ…GMITRLRHPV (97 aa)) is the SH2 domain. A Protein kinase domain is found at 393–646 (ITLLKELGNG…QLLSAIEPLR (254 aa)). ATP is bound by residues 399–407 (LGNGQFGVV) and Lys421. Asp512 acts as the Proton acceptor in catalysis. Position 542 is a phosphotyrosine; by SRC and autocatalysis (Tyr542).

It belongs to the protein kinase superfamily. Tyr protein kinase family. TEC subfamily. Interacts with BCAR1, CAV1, MYD88, PTK2/FAK1, RUFY1, RUFY2, STAT3, TIRAP and TNFRSF1B. The cofactor is Zn(2+). In terms of processing, phosphorylated in response to protein I/II and to LPS. Phosphorylation at Tyr-542 by SRC and by autocatalysis leads to activation and is required for STAT3 phosphorylation by BMX. As to expression, specifically expressed in the endocardium of the developing heart as well as in the endocardium of the left ventricle and in the endothelium of large arteries in adult mice.

Its subcellular location is the cytoplasm. It catalyses the reaction L-tyrosyl-[protein] + ATP = O-phospho-L-tyrosyl-[protein] + ADP + H(+). With respect to regulation, TEK and vascular endothelial growth factor receptor 1 (FLT1) stimulate BMX tyrosine kinase activity. Activated by integrins through the mediation of PTK2/FAK1. Activated by TNF through the mediation of TNFRSF1B. In terms of biological role, non-receptor tyrosine kinase that plays central but diverse modulatory roles in various signaling processes involved in the regulation of actin reorganization, cell migration, cell proliferation and survival, cell adhesion, and apoptosis. Participates in signal transduction stimulated by growth factor receptors, cytokine receptors, G-protein coupled receptors, antigen receptors and integrins. Induces tyrosine phosphorylation of BCAR1 in response to integrin regulation. Activation of BMX by integrins is mediated by PTK2/FAK1, a key mediator of integrin signaling events leading to the regulation of actin cytoskeleton and cell motility. Plays a critical role in TNF-induced angiogenesis, and implicated in the signaling of TEK and FLT1 receptors, 2 important receptor families essential for angiogenesis. Required for the phosphorylation and activation of STAT3, a transcription factor involved in cell differentiation. Also involved in interleukin-6 (IL6) induced differentiation. Also plays a role in programming adaptive cytoprotection against extracellular stress in different cell systems, salivary epithelial cells, brain endothelial cells, and dermal fibroblasts. May be involved in regulation of endocytosis through its interaction with an endosomal protein RUFY1. May also play a role in the growth and differentiation of hematopoietic cells; as well as in signal transduction in endocardial and arterial endothelial cells. This chain is Cytoplasmic tyrosine-protein kinase BMX (Bmx), found in Mus musculus (Mouse).